The sequence spans 189 residues: Apolipoprotein D (189 aa).

The signal sequence occupies residues 1 to 20 (MVMLLLLLSALAGLFGAAEG). Q21 bears the Pyrrolidone carboxylic acid mark. Cystine bridges form between C28-C134 and C61-C185. N65 and N98 each carry an N-linked (GlcNAc...) asparagine glycan.

Belongs to the calycin superfamily. Lipocalin family. As to quaternary structure, homodimer.

The protein localises to the secreted. Its function is as follows. APOD occurs in the macromolecular complex with lecithin-cholesterol acyltransferase. It is probably involved in the transport and binding of bilin. Appears to be able to transport a variety of ligands in a number of different contexts. This chain is Apolipoprotein D (APOD), found in Macaca fascicularis (Crab-eating macaque).